A 531-amino-acid polypeptide reads, in one-letter code: L-aspartate oxidase (531 aa).

Residues 11 to 14 (SGAA), lysine 33, 40 to 47 (NSVYAQGG), 151 to 152 (TA), and aspartate 205 contribute to the FAD site. Residue arginine 272 is the Proton donor/acceptor of the active site. Residues glutamate 353 and 369–370 (SL) each bind FAD.

Belongs to the FAD-dependent oxidoreductase 2 family. NadB subfamily. In terms of assembly, monomer. Homodimer. Requires FAD as cofactor.

It localises to the cytoplasm. The enzyme catalyses L-aspartate + O2 = iminosuccinate + H2O2. It carries out the reaction fumarate + L-aspartate = iminosuccinate + succinate. It functions in the pathway cofactor biosynthesis; NAD(+) biosynthesis; iminoaspartate from L-aspartate (oxidase route): step 1/1. Catalyzes the oxidation of L-aspartate to iminoaspartate, the first step in the de novo biosynthesis of NAD(+). Can use either oxygen or fumarate as electron acceptors, which allows the enzyme to be functional under aerobic and anaerobic conditions. The protein is L-aspartate oxidase of Bacillus subtilis (strain 168).